A 223-amino-acid polypeptide reads, in one-letter code: Urease accessory protein UreF (223 aa).

The protein belongs to the UreF family. UreD, UreF and UreG form a complex that acts as a GTP-hydrolysis-dependent molecular chaperone, activating the urease apoprotein by helping to assemble the nickel containing metallocenter of UreC. The UreE protein probably delivers the nickel.

It localises to the cytoplasm. Its function is as follows. Required for maturation of urease via the functional incorporation of the urease nickel metallocenter. The protein is Urease accessory protein UreF of Rhizobium meliloti (strain 1021) (Ensifer meliloti).